Consider the following 658-residue polypeptide: UvrABC system protein B (658 aa).

Positions Lys25 to Arg416 constitute a Helicase ATP-binding domain. Gly38–Thr45 lines the ATP pocket. The short motif at His91–Ile114 is the Beta-hairpin element. Residues Gln433–Lys607 form the Helicase C-terminal domain. In terms of domain architecture, UVR spans Glu623–Leu658.

The protein belongs to the UvrB family. As to quaternary structure, forms a heterotetramer with UvrA during the search for lesions. Interacts with UvrC in an incision complex.

Its subcellular location is the cytoplasm. In terms of biological role, the UvrABC repair system catalyzes the recognition and processing of DNA lesions. A damage recognition complex composed of 2 UvrA and 2 UvrB subunits scans DNA for abnormalities. Upon binding of the UvrA(2)B(2) complex to a putative damaged site, the DNA wraps around one UvrB monomer. DNA wrap is dependent on ATP binding by UvrB and probably causes local melting of the DNA helix, facilitating insertion of UvrB beta-hairpin between the DNA strands. Then UvrB probes one DNA strand for the presence of a lesion. If a lesion is found the UvrA subunits dissociate and the UvrB-DNA preincision complex is formed. This complex is subsequently bound by UvrC and the second UvrB is released. If no lesion is found, the DNA wraps around the other UvrB subunit that will check the other stand for damage. In Helicobacter pylori (strain J99 / ATCC 700824) (Campylobacter pylori J99), this protein is UvrABC system protein B.